We begin with the raw amino-acid sequence, 120 residues long: MIF-like protein mif-2 (120 aa).

Belongs to the MIF family.

This Caenorhabditis elegans protein is MIF-like protein mif-2 (mif-2).